Consider the following 32-residue polypeptide: Zinc metalloproteinase carinactivase-1 catalytic subunit (32 aa).

The region spanning 10-32 (FIKLVIVVDHSMVXKXNNDLIAI) is the Peptidase M12B domain.

This sequence belongs to the venom metalloproteinase (M12B) family. P-III subfamily. P-IIId sub-subfamily. Heterodimer of a metalloproteinase subunit and a regulatory subunit comprising two disulfide-linked lectins (14 kDa and 17 kDa chains) (AC Q9PRP7 and AC Q9PRP8). Zn(2+) serves as cofactor. As to expression, expressed by the venom gland.

The protein localises to the secreted. In terms of biological role, calcium-dependent prothrombin (F2) activator. This protein may activate prothrombin via recognition by the regulatory subunit of the calcium ion bound conformation of its gamma-carboxyglutamic acid (GLA) domain, and the subsequent conversion of prothrombin to active thrombin is catalyzed by the catalytic subunit. In Echis carinatus (Saw-scaled viper), this protein is Zinc metalloproteinase carinactivase-1 catalytic subunit.